A 1522-amino-acid chain; its full sequence is ATP-binding cassette sub-family C member 3 (1522 aa).

The Extracellular segment spans residues 1–32; it reads MDRLCGSGELGSKFWDSNLTVYTNTPDLTPCF. N-linked (GlcNAc...) asparagine glycosylation occurs at Asn-18. The chain crosses the membrane as a helical span at residues 33 to 53; that stretch reads QNSLLAWVPCIYLWAALPCYL. Topologically, residues 54-73 are cytoplasmic; that stretch reads FYLRHHRLGYIVLSCLSRLK. The chain crosses the membrane as a helical span at residues 74 to 94; that stretch reads TALGVLLWCISWVDLFYSFHG. At 95–99 the chain is on the extracellular side; the sequence is LVHGS. Residues 100–120 traverse the membrane as a helical segment; the sequence is SPAPVFFITPLLVGITMLLAT. The Cytoplasmic portion of the chain corresponds to 121-132; that stretch reads LLIQYERLRGVR. The helical transmembrane segment at 133 to 153 threads the bilayer; sequence SSGVLIIFWLLCVICAIIPFR. Topologically, residues 154 to 171 are extracellular; that stretch reads SKILLALAEGKILDPFRF. The helical transmembrane segment at 172-192 threads the bilayer; sequence TTFYIYFALVLCAFILSCFQE. At 193-301 the chain is on the cytoplasmic side; sequence KPPLFSPENL…KTKKPSFLRA (109 aa). Residues 302 to 322 traverse the membrane as a helical segment; the sequence is LVRTFTSSLLMGACFKLIQDL. An ABC transmembrane type-1 1 domain is found at 310–592; sequence LLMGACFKLI…LPQLISGMTQ (283 aa). At 323–347 the chain is on the extracellular side; sequence SPSSTHSCSASSSGLFRPHGPYWWG. A helical transmembrane segment spans residues 348 to 368; that stretch reads FLLAGLMFVSSTMQTLILHQH. At 369-424 the chain is on the cytoplasmic side; that stretch reads YHCIFVMALRIRTAIIGVIYRKALTITNSVKREYTVGEMVNLMSVDAQRFMDVSPF. The chain crosses the membrane as a helical span at residues 425-445; sequence INLLWSAPLQVILAIYFLWQI. Over 446-448 the chain is Extracellular; it reads LGP. A helical transmembrane segment spans residues 449-469; it reads SALAGVAVIVLLIPLNGAVSM. Residues 470–531 lie on the Cytoplasmic side of the membrane; that stretch reads KMKTYQVQQM…LLRKGAYLQA (62 aa). A helical membrane pass occupies residues 532 to 552; the sequence is ISTFIWVCTPFMVTLITLGVY. The Extracellular portion of the chain corresponds to 553–574; it reads VCVDKNNVLDAEKAFVSLSLFN. Residues 575–595 form a helical membrane-spanning segment; it reads ILKIPLNLLPQLISGMTQTSV. The Cytoplasmic segment spans residues 596-958; that stretch reads SLKRIQDFLN…VKLSVYWDYA (363 aa). The region spanning 625–849 is the ABC transporter 1 domain; that stretch reads ITIHNGTFSW…DGSFANFLRN (225 aa). 659–666 contacts ATP; sequence GPVGCGKS. A phosphoserine mark is found at Ser-902 and Ser-905. A helical membrane pass occupies residues 959 to 979; that stretch reads KSVGLCTTLFICLLYAGQNAV. The ABC transmembrane type-1 2 domain occupies 966–1247; that stretch reads TLFICLLYAG…MIRTLSDLES (282 aa). At 980–1016 the chain is on the extracellular side; it reads AIGANVWLSAWTNDVEEHGQQNNTSVRLGVYATLGIL. 2 N-linked (GlcNAc...) asparagine glycosylation sites follow: Asn-1001 and Asn-1002. A helical membrane pass occupies residues 1017 to 1037; the sequence is QGLLVMLSAFTMVVGAIQAAR. Over 1038 to 1080 the chain is Cytoplasmic; the sequence is LLHTALLHNQIRAPQSFFDTTPSGRILNRFSKDIYVIHEVLAP. The chain crosses the membrane as a helical span at residues 1081-1101; sequence TILMLFNSFYTSISTIVVIVA. Position 1102 (Ser-1102) is a topological domain, extracellular. The helical transmembrane segment at 1103–1123 threads the bilayer; it reads TPLFCVVVLPLAVFYGFVQRF. Residues 1124–1194 lie on the Cytoplasmic side of the membrane; it reads YVATSRQLKR…ASNRWLGVHV (71 aa). The helical transmembrane segment at 1195–1215 threads the bilayer; that stretch reads EFVGNCVVLFSALFAVIGRNS. Topologically, residues 1216–1217 are extracellular; that stretch reads LN. The chain crosses the membrane as a helical span at residues 1218 to 1238; that stretch reads PGLVGLSVSYALQVTLSLNWM. At 1239–1522 the chain is on the cytoplasmic side; it reads IRTLSDLESN…YGMAKDAGLA (284 aa). Residues 1286-1518 enclose the ABC transporter 2 domain; that stretch reads FRNYSVRYRP…GGIFYGMAKD (233 aa). 1318–1325 contributes to the ATP binding site; the sequence is GRTGAGKS.

Belongs to the ABC transporter superfamily. ABCC family. Conjugate transporter (TC 3.A.1.208) subfamily. As to expression, expressed in lung, ileum, colon and liver. Higher in liver of Eisai hyperbilirubinemic rats.

It is found in the basolateral cell membrane. The protein resides in the basal cell membrane. The enzyme catalyses an S-substituted glutathione(in) + ATP + H2O = an S-substituted glutathione(out) + ADP + phosphate + H(+). It carries out the reaction ATP + H2O + xenobioticSide 1 = ADP + phosphate + xenobioticSide 2.. The catalysed reaction is taurocholate(in) + ATP + H2O = taurocholate(out) + ADP + phosphate + H(+). It catalyses the reaction glycocholate(in) + ATP + H2O = glycocholate(out) + ADP + phosphate + H(+). The enzyme catalyses taurolithocholate 3-sulfate(in) + ATP + H2O = taurolithocholate 3-sulfate(out) + ADP + phosphate + H(+). It carries out the reaction 17beta-estradiol 17-O-(beta-D-glucuronate)(in) + ATP + H2O = 17beta-estradiol 17-O-(beta-D-glucuronate)(out) + ADP + phosphate + H(+). The catalysed reaction is dehydroepiandrosterone 3-sulfate(in) + ATP + H2O = dehydroepiandrosterone 3-sulfate(out) + ADP + phosphate + H(+). It catalyses the reaction leukotriene C4(in) + ATP + H2O = leukotriene C4(out) + ADP + phosphate + H(+). The enzyme catalyses (4Z,15Z)-bilirubin IXalpha C8-beta-D-glucuronoside(in) + ATP + H2O = (4Z,15Z)-bilirubin IXalpha C8-beta-D-glucuronoside(out) + ADP + phosphate + H(+). It carries out the reaction (4Z,15Z)-bilirubin IXalpha C8,C12-beta-D-bisglucuronoside(in) + ATP + H2O = (4Z,15Z)-bilirubin IXalpha C8,C12-beta-D-bisglucuronoside(out) + ADP + phosphate + H(+). The catalysed reaction is taurochenodeoxycholate 3-sulfate(in) + ATP + H2O = taurochenodeoxycholate 3-sulfate(out) + ADP + phosphate + H(+). In terms of biological role, ATP-dependent transporter of the ATP-binding cassette (ABC) family that binds and hydrolyzes ATP to enable active transport of various substrates including many drugs, toxicants and endogenous compound across cell membranes. Transports glucuronide conjugates such as bilirubin diglucuronide, estradiol-17-beta-o-glucuronide and GSH conjugates such as leukotriene C4 (LTC4). Transports also various bile salts (taurocholate, glycocholate, taurochenodeoxycholate-3-sulfate, taurolithocholate- 3-sulfate). Does not contribute substantially to bile salt physiology but provides an alternative route for the export of bile acids and glucuronides from cholestatic hepatocytes. May contribute to regulate the transport of organic compounds in testes across the blood-testis-barrier. The chain is ATP-binding cassette sub-family C member 3 (Abcc3) from Rattus norvegicus (Rat).